The sequence spans 336 residues: Glycerol-3-phosphate dehydrogenase [NAD(P)+] (336 aa).

Residues serine 16, tyrosine 17, histidine 37, and lysine 111 each contribute to the NADPH site. The sn-glycerol 3-phosphate site is built by lysine 111, glycine 140, and threonine 142. Residue alanine 144 coordinates NADPH. Residues lysine 196, aspartate 249, serine 259, arginine 260, and asparagine 261 each coordinate sn-glycerol 3-phosphate. Catalysis depends on lysine 196, which acts as the Proton acceptor. Residue arginine 260 participates in NADPH binding. Residues valine 284 and glutamate 286 each contribute to the NADPH site.

It belongs to the NAD-dependent glycerol-3-phosphate dehydrogenase family.

The protein localises to the cytoplasm. The catalysed reaction is sn-glycerol 3-phosphate + NAD(+) = dihydroxyacetone phosphate + NADH + H(+). The enzyme catalyses sn-glycerol 3-phosphate + NADP(+) = dihydroxyacetone phosphate + NADPH + H(+). Its pathway is membrane lipid metabolism; glycerophospholipid metabolism. In terms of biological role, catalyzes the reduction of the glycolytic intermediate dihydroxyacetone phosphate (DHAP) to sn-glycerol 3-phosphate (G3P), the key precursor for phospholipid synthesis. This is Glycerol-3-phosphate dehydrogenase [NAD(P)+] from Haemophilus ducreyi (strain 35000HP / ATCC 700724).